We begin with the raw amino-acid sequence, 520 residues long: Probable DNA ligase (520 aa).

Glu213 provides a ligand contact to ATP. The active-site N6-AMP-lysine intermediate is the Lys215. Positions 220, 235, 264, 300, 372, and 378 each coordinate ATP.

Belongs to the ATP-dependent DNA ligase family. Requires Mg(2+) as cofactor.

The catalysed reaction is ATP + (deoxyribonucleotide)n-3'-hydroxyl + 5'-phospho-(deoxyribonucleotide)m = (deoxyribonucleotide)n+m + AMP + diphosphate.. In terms of biological role, DNA ligase that seals nicks in double-stranded DNA during DNA replication, DNA recombination and DNA repair. The chain is Probable DNA ligase from Mycobacterium sp. (strain JLS).